Reading from the N-terminus, the 69-residue chain is Cytochrome c oxidase subunit 8A, mitochondrial (69 aa).

A mitochondrion-targeting transit peptide spans 1–25 (MSSLTPLLLRSLTGPARRLMVPRAQ). An SIFI-degron motif is present at residues 2–19 (SSLTPLLLRSLTGPARRL). The Mitochondrial matrix segment spans residues 26–36 (VHSKPPREQLG). Residues 37-60 (VLDITIGLTSCFVCCLLPAGWVLS) form a helical membrane-spanning segment. The Mitochondrial intermembrane segment spans residues 61-69 (HLESYKKRE).

The protein belongs to the cytochrome c oxidase VIII family. As to quaternary structure, component of the cytochrome c oxidase (complex IV, CIV), a multisubunit enzyme composed of 14 subunits. The complex is composed of a catalytic core of 3 subunits MT-CO1, MT-CO2 and MT-CO3, encoded in the mitochondrial DNA, and 11 supernumerary subunits COX4I, COX5A, COX5B, COX6A, COX6B, COX6C, COX7A, COX7B, COX7C, COX8 and NDUFA4, which are encoded in the nuclear genome. The complex exists as a monomer or a dimer and forms supercomplexes (SCs) in the inner mitochondrial membrane with NADH-ubiquinone oxidoreductase (complex I, CI) and ubiquinol-cytochrome c oxidoreductase (cytochrome b-c1 complex, complex III, CIII), resulting in different assemblies (supercomplex SCI(1)III(2)IV(1) and megacomplex MCI(2)III(2)IV(2)). In response to mitochondrial stress, the precursor protein is ubiquitinated by the SIFI complex in the cytoplasm before mitochondrial import, leading to its degradation. Within the SIFI complex, UBR4 initiates ubiquitin chain that are further elongated or branched by KCMF1.

It localises to the mitochondrion inner membrane. The protein operates within energy metabolism; oxidative phosphorylation. In terms of biological role, component of the cytochrome c oxidase, the last enzyme in the mitochondrial electron transport chain which drives oxidative phosphorylation. The respiratory chain contains 3 multisubunit complexes succinate dehydrogenase (complex II, CII), ubiquinol-cytochrome c oxidoreductase (cytochrome b-c1 complex, complex III, CIII) and cytochrome c oxidase (complex IV, CIV), that cooperate to transfer electrons derived from NADH and succinate to molecular oxygen, creating an electrochemical gradient over the inner membrane that drives transmembrane transport and the ATP synthase. Cytochrome c oxidase is the component of the respiratory chain that catalyzes the reduction of oxygen to water. Electrons originating from reduced cytochrome c in the intermembrane space (IMS) are transferred via the dinuclear copper A center (CU(A)) of subunit 2 and heme A of subunit 1 to the active site in subunit 1, a binuclear center (BNC) formed by heme A3 and copper B (CU(B)). The BNC reduces molecular oxygen to 2 water molecules using 4 electrons from cytochrome c in the IMS and 4 protons from the mitochondrial matrix. The chain is Cytochrome c oxidase subunit 8A, mitochondrial (Cox8a) from Rattus norvegicus (Rat).